The primary structure comprises 164 residues: Phosphopantetheine adenylyltransferase (164 aa).

S9 lines the substrate pocket. Residues 9-10 (SF) and H17 each bind ATP. Substrate-binding residues include K41, V78, and R92. ATP contacts are provided by residues 93–95 (GLR), E103, and 128–134 (VRTITAT).

The protein belongs to the bacterial CoaD family. In terms of assembly, homohexamer. It depends on Mg(2+) as a cofactor.

Its subcellular location is the cytoplasm. The enzyme catalyses (R)-4'-phosphopantetheine + ATP + H(+) = 3'-dephospho-CoA + diphosphate. It participates in cofactor biosynthesis; coenzyme A biosynthesis; CoA from (R)-pantothenate: step 4/5. Reversibly transfers an adenylyl group from ATP to 4'-phosphopantetheine, yielding dephospho-CoA (dPCoA) and pyrophosphate. The protein is Phosphopantetheine adenylyltransferase of Brucella abortus (strain 2308).